The chain runs to 377 residues: 5-hydroxytryptamine receptor 1D (377 aa).

N-linked (GlcNAc...) asparagine glycans are attached at residues Asn-5, Asn-17, and Asn-21. Helical transmembrane passes span Ile-39 to Phe-64, Leu-76 to Ala-97, and Leu-110 to Leu-134. A disulfide bridge connects residues Cys-111 and Cys-188. Residues Asp-118 and Cys-122 each coordinate serotonin. The DRY motif; important for ligand-induced conformation changes signature appears at Asp-135–Tyr-137. The next 4 membrane-spanning stretches (helical) occupy residues Ala-155 to Trp-176, Ile-195 to Gly-218, Lys-301 to Ile-326, and Ala-336 to Phe-359. Serotonin is bound at residue Ser-321. The NPxxY motif; important for ligand-induced conformation changes and signaling motif lies at Asn-352–Tyr-356.

It belongs to the G-protein coupled receptor 1 family. As to quaternary structure, homodimer. Heterodimer with HTR1B.

It localises to the cell membrane. Its function is as follows. G-protein coupled receptor for 5-hydroxytryptamine (serotonin). Also functions as a receptor for ergot alkaloid derivatives, various anxiolytic and antidepressant drugs and other psychoactive substances. Ligand binding causes a conformation change that triggers signaling via guanine nucleotide-binding proteins (G proteins) and modulates the activity of downstream effectors, such as adenylate cyclase. HTR1D is coupled to G(i)/G(o) G alpha proteins and mediates inhibitory neurotransmission by inhibiting adenylate cyclase activity. Regulates the release of 5-hydroxytryptamine in the brain, and thereby affects neural activity. May also play a role in regulating the release of other neurotransmitters. May play a role in vasoconstriction. The chain is 5-hydroxytryptamine receptor 1D (HTR1D) from Canis lupus familiaris (Dog).